We begin with the raw amino-acid sequence, 243 residues long: 1-(5-phosphoribosyl)-5-[(5-phosphoribosylamino)methylideneamino] imidazole-4-carboxamide isomerase (243 aa).

Aspartate 8 acts as the Proton acceptor in catalysis. The Proton donor role is filled by aspartate 129.

The protein belongs to the HisA/HisF family.

It localises to the cytoplasm. It carries out the reaction 1-(5-phospho-beta-D-ribosyl)-5-[(5-phospho-beta-D-ribosylamino)methylideneamino]imidazole-4-carboxamide = 5-[(5-phospho-1-deoxy-D-ribulos-1-ylimino)methylamino]-1-(5-phospho-beta-D-ribosyl)imidazole-4-carboxamide. It functions in the pathway amino-acid biosynthesis; L-histidine biosynthesis; L-histidine from 5-phospho-alpha-D-ribose 1-diphosphate: step 4/9. The polypeptide is 1-(5-phosphoribosyl)-5-[(5-phosphoribosylamino)methylideneamino] imidazole-4-carboxamide isomerase (Nitratidesulfovibrio vulgaris (strain DSM 19637 / Miyazaki F) (Desulfovibrio vulgaris)).